Consider the following 313-residue polypeptide: Transcription initiation factor IIB 2 (313 aa).

A TFIIB-type zinc finger spans residues 13 to 44 (APKRCPECHSEHLIRDYEHGELICADCGAVIE). Zn(2+) contacts are provided by Cys-17, Cys-20, Cys-36, and Cys-39. A run of 2 repeats spans residues 130–213 (QLLN…AKEL) and 224–305 (SYIA…EISK).

Belongs to the TFIIB family.

In terms of biological role, stabilizes TBP binding to an archaeal box-A promoter. Also responsible for recruiting RNA polymerase II to the pre-initiation complex (DNA-TBP-TFIIB). This Thermoplasma volcanium (strain ATCC 51530 / DSM 4299 / JCM 9571 / NBRC 15438 / GSS1) protein is Transcription initiation factor IIB 2.